Reading from the N-terminus, the 557-residue chain is Selenoprotein N (557 aa).

Basic and acidic residues predominate over residues Met1–Gly21. Residues Met1–Gly28 form a disordered region. Residues Ile35–Leu55 traverse the membrane as a helical segment. A non-standard amino acid (selenocysteine) is located at residue Sec430. Residues Asn451 and Asn499 are each glycosylated (N-linked (GlcNAc...) asparagine).

Interacts with ryr3.

Its subcellular location is the endoplasmic reticulum membrane. Its function is as follows. Plays an important role in cell protection against oxidative stress and in the regulation of redox-related calcium homeostasis. Regulates the calcium level of the ER by protecting the calcium pump ATP2A2 against the oxidoreductase ERO1A-mediated oxidative damage. Acts as a modulator of ryanodine receptor (RyR) activity: protects RyR from oxidation due to increased oxidative stress, or directly controls the RyR redox state, regulating the RyR-mediated calcium mobilization required for normal muscle development and differentiation. Plays an important role in muscle development and differentiation during early development. Required for development of the slow muscle fiber lineage. Required for the correct organization and attachment of the myofibrils, as well as for the continuity and integrity of the connective tissue that forms the myoseptum. In Danio rerio (Zebrafish), this protein is Selenoprotein N.